The sequence spans 917 residues: Hexokinase-1 (917 aa).

Met-1 carries the N-acetylmethionine modification. Residues Met-1–Tyr-10 form a mitochondrial-binding peptide (MBP) region. Hexokinase domains lie at Asp-16–Ala-458 and Ala-464–Ala-906. ATP is bound by residues Arg-30 and Asp-84–Ser-89. The tract at residues Asp-73–Val-207 is hexokinase small subdomain 1. Asp-84–Arg-91 contacts D-glucose 6-phosphate. Residues Ser-155, Thr-172 to Lys-173, and Asn-208 to Asp-209 each bind D-glucose. The tract at residues Asn-208–Ser-447 is hexokinase large subdomain 1. D-glucose 6-phosphate contacts are provided by Asp-209 and Thr-232. D-glucose contacts are provided by residues Asn-235, Glu-260, and Gln-291 to Glu-294. Phosphoserine is present on Ser-337. Asn-345 contributes to the ATP binding site. A D-glucose 6-phosphate-binding site is contributed by Asp-413–Ser-415. An ATP-binding site is contributed by Arg-425–Arg-426. D-glucose 6-phosphate is bound by residues Ser-449 and Asp-532–Thr-536. Residues Asp-521–Val-655 form a hexokinase small subdomain 2 region. Asp-532–Asn-537 contacts ATP. Residues Ser-603 to Phe-604, Thr-620 to Lys-621, and Asn-656 to Asp-657 contribute to the D-glucose site. The segment at Asn-656–Asp-895 is hexokinase large subdomain 2. Positions 657 and 680 each coordinate D-glucose 6-phosphate. Residue Thr-680 participates in ATP binding. Residues Ser-682–Asn-683, Glu-708, and Glu-742 each bind D-glucose. ATP contacts are provided by residues Gly-747 to Met-748, Thr-784 to Ser-788, and Thr-863 to Leu-867. D-glucose 6-phosphate contacts are provided by residues Asp-861–Thr-863 and Ser-897.

It belongs to the hexokinase family. In terms of assembly, monomer. Interacts with RABL2/RABL2A; binds preferentially to GTP-bound RABL2. Interacts with VDAC1. The HK1-VDAC1 complex interacts with ATF2. Interacts (via N-terminal spermatogenic cell-specific region) with PFKM (via C-terminus). Interacts with SMAD5. Isoform 2: Erythrocyte specific. Isoform 3: Testis-specific. Isoform 4: Testis-specific.

The protein localises to the mitochondrion outer membrane. It is found in the cytoplasm. It localises to the cytosol. The enzyme catalyses a D-hexose + ATP = a D-hexose 6-phosphate + ADP + H(+). It catalyses the reaction D-fructose + ATP = D-fructose 6-phosphate + ADP + H(+). It carries out the reaction D-glucose + ATP = D-glucose 6-phosphate + ADP + H(+). The catalysed reaction is D-mannose + ATP = D-mannose 6-phosphate + ADP + H(+). The enzyme catalyses D-glucosamine + ATP = D-glucosamine 6-phosphate + ADP + H(+). Its pathway is carbohydrate metabolism; hexose metabolism. It functions in the pathway carbohydrate degradation; glycolysis; D-glyceraldehyde 3-phosphate and glycerone phosphate from D-glucose: step 1/4. Hexokinase is an allosteric enzyme inhibited by its product D-glucose 6-phosphate. Hexokinase activity is inhibited by N-acetyl-D-glucosamine. Catalyzes the phosphorylation of various hexoses, such as D-glucose, D-glucosamine, D-fructose, D-mannose and 2-deoxy-D-glucose, to hexose 6-phosphate (D-glucose 6-phosphate, D-glucosamine 6-phosphate, D-fructose 6-phosphate, D-mannose 6-phosphate and 2-deoxy-D-glucose 6-phosphate, respectively). Does not phosphorylate N-acetyl-D-glucosamine. Mediates the initial step of glycolysis by catalyzing phosphorylation of D-glucose to D-glucose 6-phosphate. Involved in innate immunity and inflammation by acting as a pattern recognition receptor for bacterial peptidoglycan. When released in the cytosol, N-acetyl-D-glucosamine component of bacterial peptidoglycan inhibits the hexokinase activity of HK1 and causes its dissociation from mitochondrial outer membrane, thereby activating the NLRP3 inflammasome. The polypeptide is Hexokinase-1 (Homo sapiens (Human)).